Consider the following 506-residue polypeptide: ATP synthase subunit alpha (506 aa).

169-176 is an ATP binding site; it reads GDRQTGKT.

Belongs to the ATPase alpha/beta chains family. As to quaternary structure, F-type ATPases have 2 components, CF(1) - the catalytic core - and CF(0) - the membrane proton channel. CF(1) has five subunits: alpha(3), beta(3), gamma(1), delta(1), epsilon(1). CF(0) has three main subunits: a(1), b(2) and c(9-12). The alpha and beta chains form an alternating ring which encloses part of the gamma chain. CF(1) is attached to CF(0) by a central stalk formed by the gamma and epsilon chains, while a peripheral stalk is formed by the delta and b chains.

It localises to the cell membrane. It catalyses the reaction ATP + H2O + 4 H(+)(in) = ADP + phosphate + 5 H(+)(out). Its function is as follows. Produces ATP from ADP in the presence of a proton gradient across the membrane. The alpha chain is a regulatory subunit. This Lawsonia intracellularis (strain PHE/MN1-00) protein is ATP synthase subunit alpha.